We begin with the raw amino-acid sequence, 411 residues long: Ornithine aminotransferase (411 aa).

Residue lysine 257 is modified to N6-(pyridoxal phosphate)lysine.

This sequence belongs to the class-III pyridoxal-phosphate-dependent aminotransferase family. OAT subfamily. Requires pyridoxal 5'-phosphate as cofactor.

The protein localises to the cytoplasm. It carries out the reaction a 2-oxocarboxylate + L-ornithine = L-glutamate 5-semialdehyde + an L-alpha-amino acid. The protein operates within amino-acid biosynthesis; L-proline biosynthesis; L-glutamate 5-semialdehyde from L-ornithine: step 1/1. Functionally, catalyzes the interconversion of ornithine to glutamate semialdehyde. This is Ornithine aminotransferase from Bordetella bronchiseptica (strain ATCC BAA-588 / NCTC 13252 / RB50) (Alcaligenes bronchisepticus).